A 77-amino-acid chain; its full sequence is Putative neurotoxin 2 (77 aa).

A signal peptide spans 1–25 (MKAFIVILSIAIVLLLIVSIKETSA). Residues 26-46 (KDCKQECVKRYTNGDFTNFFK) constitute a propeptide that is removed on maturation.

This sequence belongs to the scolopendra neurotoxin 3 family. Contains 2 disulfide bonds. In terms of tissue distribution, expressed by the venom gland.

It is found in the secreted. This chain is Putative neurotoxin 2, found in Scolopendra mutilans (Chinese red-headed centipede).